The sequence spans 399 residues: Formate-dependent phosphoribosylglycinamide formyltransferase (399 aa).

N(1)-(5-phospho-beta-D-ribosyl)glycinamide-binding positions include 22–23 and E82; that span reads EL. ATP-binding positions include R115, K157, 162–167, 197–200, and E205; these read SSGKGQ and EAVV. The region spanning 120–315 is the ATP-grasp domain; that stretch reads RLAAEELGLQ…EFELHARAIL (196 aa). Residues E274 and E286 each coordinate Mg(2+). Residues D293, K362, and 369–370 contribute to the N(1)-(5-phospho-beta-D-ribosyl)glycinamide site; that span reads RR.

It belongs to the PurK/PurT family. As to quaternary structure, homodimer.

It carries out the reaction N(1)-(5-phospho-beta-D-ribosyl)glycinamide + formate + ATP = N(2)-formyl-N(1)-(5-phospho-beta-D-ribosyl)glycinamide + ADP + phosphate + H(+). The protein operates within purine metabolism; IMP biosynthesis via de novo pathway; N(2)-formyl-N(1)-(5-phospho-D-ribosyl)glycinamide from N(1)-(5-phospho-D-ribosyl)glycinamide (formate route): step 1/1. Its function is as follows. Involved in the de novo purine biosynthesis. Catalyzes the transfer of formate to 5-phospho-ribosyl-glycinamide (GAR), producing 5-phospho-ribosyl-N-formylglycinamide (FGAR). Formate is provided by PurU via hydrolysis of 10-formyl-tetrahydrofolate. This Thioalkalivibrio sulfidiphilus (strain HL-EbGR7) protein is Formate-dependent phosphoribosylglycinamide formyltransferase.